A 311-amino-acid polypeptide reads, in one-letter code: Porphobilinogen deaminase (311 aa).

An S-(dipyrrolylmethanemethyl)cysteine modification is found at cysteine 241.

This sequence belongs to the HMBS family. Monomer. It depends on dipyrromethane as a cofactor.

The enzyme catalyses 4 porphobilinogen + H2O = hydroxymethylbilane + 4 NH4(+). It functions in the pathway porphyrin-containing compound metabolism; protoporphyrin-IX biosynthesis; coproporphyrinogen-III from 5-aminolevulinate: step 2/4. Its function is as follows. Tetrapolymerization of the monopyrrole PBG into the hydroxymethylbilane pre-uroporphyrinogen in several discrete steps. The polypeptide is Porphobilinogen deaminase (Geobacillus sp. (strain WCH70)).